The chain runs to 447 residues: Transcription factor azf1 (447 aa).

2 disordered regions span residues 125-155 and 174-199; these read HNGA…NEVE and QSPG…PQSY. A compositionally biased stretch (low complexity) spans 127-139; it reads GASQQPPGAQSSS. Residues 140-155 are compositionally biased toward polar residues; it reads NEEGAQGKSSSSNEVE. C2H2-type zinc fingers lie at residues 225–249, 255–279, 285–307, and 313–338; these read YACT…MRAH, FVCK…QRRH, FSCD…KITH, and FTCL…NKFH. The tract at residues 377–447 is disordered; it reads NKGIKGRGKD…EPYFIERQAH (71 aa). The span at 397 to 416 shows a compositional bias: basic and acidic residues; sequence PGSESRRRIEPLSSTDDKMR. The segment covering 421–431 has biased composition (polar residues); sequence GDTSMYNGGSS.

Its subcellular location is the nucleus. In terms of biological role, transcription factor that acts as a positive regulator of ochratoxin A (OTA) biosynthesis via controlling the expression of antioxidant genes and oxidative phosphorylation genes. The protein is Transcription factor azf1 of Aspergillus niger (strain ATCC MYA-4892 / CBS 513.88 / FGSC A1513).